The primary structure comprises 178 residues: MADELSEKSVEGTEEDGESAPAEGTTEGVPVDEVAKLRQELEDVKRIADERLEQLLRCRAELDNVIKRNSREREELARFASEAIIKKLLVFLDSLEQAAKHDEGAKALYDQLLDIMRSEGLEPIDAVGKKFDPFVHEAMMQVESQEAEDGIVVQEFQKGYTLHSRVIRTSKVAVAKHG.

Basic and acidic residues predominate over residues 1–11 (MADELSEKSVE). The interval 1 to 32 (MADELSEKSVEGTEEDGESAPAEGTTEGVPVD) is disordered.

The protein belongs to the GrpE family. Homodimer.

It is found in the cytoplasm. Functionally, participates actively in the response to hyperosmotic and heat shock by preventing the aggregation of stress-denatured proteins, in association with DnaK and GrpE. It is the nucleotide exchange factor for DnaK and may function as a thermosensor. Unfolded proteins bind initially to DnaJ; upon interaction with the DnaJ-bound protein, DnaK hydrolyzes its bound ATP, resulting in the formation of a stable complex. GrpE releases ADP from DnaK; ATP binding to DnaK triggers the release of the substrate protein, thus completing the reaction cycle. Several rounds of ATP-dependent interactions between DnaJ, DnaK and GrpE are required for fully efficient folding. This chain is Protein GrpE, found in Methanothrix thermoacetophila (strain DSM 6194 / JCM 14653 / NBRC 101360 / PT) (Methanosaeta thermophila).